Here is a 211-residue protein sequence, read N- to C-terminus: ATP phosphoribosyltransferase (211 aa).

It belongs to the ATP phosphoribosyltransferase family. Short subfamily. As to quaternary structure, heteromultimer composed of HisG and HisZ subunits.

Its subcellular location is the cytoplasm. It catalyses the reaction 1-(5-phospho-beta-D-ribosyl)-ATP + diphosphate = 5-phospho-alpha-D-ribose 1-diphosphate + ATP. It participates in amino-acid biosynthesis; L-histidine biosynthesis; L-histidine from 5-phospho-alpha-D-ribose 1-diphosphate: step 1/9. In terms of biological role, catalyzes the condensation of ATP and 5-phosphoribose 1-diphosphate to form N'-(5'-phosphoribosyl)-ATP (PR-ATP). Has a crucial role in the pathway because the rate of histidine biosynthesis seems to be controlled primarily by regulation of HisG enzymatic activity. The chain is ATP phosphoribosyltransferase from Rippkaea orientalis (strain PCC 8801 / RF-1) (Cyanothece sp. (strain PCC 8801)).